The chain runs to 1975 residues: Golgi-specific brefeldin A-resistance guanine nucleotide exchange factor 1 homolog (1975 aa).

Disordered regions lie at residues 216–243 (NPTE…EPEN) and 299–352 (ISAG…EEKM). Positions 221-230 (RQKRKKKRQL) are enriched in basic residues. In terms of domain architecture, SEC7 spans 624 to 812 (QIIEQKKRKR…ADMYQAIKTE (189 aa)). The segment covering 1264-1277 (QSLRVGGDQQQQRM) has biased composition (polar residues). Disordered stretches follow at residues 1264-1318 (QSLR…DLES), 1447-1473 (DEKA…VTED), 1699-1751 (IKDT…ATAQ), 1788-1854 (VHSG…QYAY), and 1877-1975 (YANQ…QEKP). The span at 1291-1309 (GAHEERAYTSEGEERRRGG) shows a compositional bias: basic and acidic residues. The span at 1451–1464 (VKKHHHHHHGHKKK) shows a compositional bias: basic residues. The segment covering 1734-1751 (SNSTAATSTSDPSIATAQ) has biased composition (low complexity). The segment covering 1797–1808 (GSPPQTEPPASS) has biased composition (pro residues). Composition is skewed to low complexity over residues 1820-1854 (YEQY…QYAY) and 1877-1894 (YANQ…QQQH). Residues 1895-1909 (PVNPTSPSVHGQYSV) show a composition bias toward polar residues. The span at 1938–1957 (TPPQNNAPALAPSAPTTTSA) shows a compositional bias: low complexity.

It localises to the golgi apparatus. Its subcellular location is the cis-Golgi network. The protein resides in the endoplasmic reticulum-Golgi intermediate compartment. Its function is as follows. Guanine-nucleotide exchange factor (GEF) for members of the Arf family of small GTPases involved in trafficking in the early secretory pathway; its GEF activity initiates the coating of nascent vesicles via the localized generation of activated ARFs through replacement of GDP with GTP. Also, plays a role in receptor-mediated endocytosis in oocytes and endosomal trafficking. Involved in vesicle retrograde transport from the ERGIC and cis-Golgi compartments to the endoplasmic reticulum (ER). Plays a role in maintaining mitochondrial morphology, network organization and function. May be required for the basolateral cell membrane localization of the serine threonine protein kinase sgk-1 in intestinal cells. The polypeptide is Golgi-specific brefeldin A-resistance guanine nucleotide exchange factor 1 homolog (Caenorhabditis elegans).